Reading from the N-terminus, the 281-residue chain is Shikimate dehydrogenase (NADP(+)) (281 aa).

Shikimate is bound by residues 14–16 and Thr-61; that span reads SKS. Residue Lys-65 is the Proton acceptor of the active site. Asn-86 and Asp-105 together coordinate shikimate. NADP(+)-binding positions include 130–134, 154–159, and Met-221; these read GAGGA and NRTAAK. Tyr-223 contributes to the shikimate binding site. Gly-245 lines the NADP(+) pocket.

It belongs to the shikimate dehydrogenase family. Homodimer.

It carries out the reaction shikimate + NADP(+) = 3-dehydroshikimate + NADPH + H(+). It functions in the pathway metabolic intermediate biosynthesis; chorismate biosynthesis; chorismate from D-erythrose 4-phosphate and phosphoenolpyruvate: step 4/7. Involved in the biosynthesis of the chorismate, which leads to the biosynthesis of aromatic amino acids. Catalyzes the reversible NADPH linked reduction of 3-dehydroshikimate (DHSA) to yield shikimate (SA). The polypeptide is Shikimate dehydrogenase (NADP(+)) (Azoarcus sp. (strain BH72)).